A 185-amino-acid chain; its full sequence is Ribosome-recycling factor (185 aa).

Residues 143–163 (RKDGEAGEDEVARAEKDLDKS) form a disordered region.

It belongs to the RRF family.

It is found in the cytoplasm. Responsible for the release of ribosomes from messenger RNA at the termination of protein biosynthesis. May increase the efficiency of translation by recycling ribosomes from one round of translation to another. The chain is Ribosome-recycling factor from Mycobacterium ulcerans (strain Agy99).